The sequence spans 131 residues: C-type natriuretic peptide 2 (131 aa).

Positions 1 to 22 (MLYPALLCAALLLIAPLGHTEG) are cleaved as a signal peptide. The propeptide occupies 23-109 (RTLYPSPDAI…KRAVTDRSRR (87 aa)). Cys115 and Cys131 form a disulfide bridge.

Belongs to the natriuretic peptide family. Expressed in brain and to a low extent in atrium.

The protein resides in the secreted. Its function is as follows. Exhibits natriuretic and vasodepressor activity. Has a cGMP-stimulating activity. This Oncorhynchus mykiss (Rainbow trout) protein is C-type natriuretic peptide 2.